The sequence spans 373 residues: Probable tRNA sulfurtransferase (373 aa).

The THUMP domain maps to 54–158 (NKNIEELSKV…NDVAYFYYKI (105 aa)). ATP contacts are provided by residues 176 to 177 (LF), 201 to 202 (NF), K256, G278, and Q287.

It belongs to the ThiI family.

Its subcellular location is the cytoplasm. The catalysed reaction is [ThiI sulfur-carrier protein]-S-sulfanyl-L-cysteine + a uridine in tRNA + 2 reduced [2Fe-2S]-[ferredoxin] + ATP + H(+) = [ThiI sulfur-carrier protein]-L-cysteine + a 4-thiouridine in tRNA + 2 oxidized [2Fe-2S]-[ferredoxin] + AMP + diphosphate. It catalyses the reaction [ThiS sulfur-carrier protein]-C-terminal Gly-Gly-AMP + S-sulfanyl-L-cysteinyl-[cysteine desulfurase] + AH2 = [ThiS sulfur-carrier protein]-C-terminal-Gly-aminoethanethioate + L-cysteinyl-[cysteine desulfurase] + A + AMP + 2 H(+). It functions in the pathway cofactor biosynthesis; thiamine diphosphate biosynthesis. Catalyzes the ATP-dependent transfer of a sulfur to tRNA to produce 4-thiouridine in position 8 of tRNAs, which functions as a near-UV photosensor. Also catalyzes the transfer of sulfur to the sulfur carrier protein ThiS, forming ThiS-thiocarboxylate. This is a step in the synthesis of thiazole, in the thiamine biosynthesis pathway. The sulfur is donated as persulfide by IscS. The sequence is that of Probable tRNA sulfurtransferase from Saccharolobus islandicus (strain Y.N.15.51 / Yellowstone #2) (Sulfolobus islandicus).